A 288-amino-acid chain; its full sequence is Mortality factor 4-like protein 2 (288 aa).

The segment covering 1–15 has biased composition (polar residues); that stretch reads MSSRKQASQTRGQQS. The segment at 1–115 is disordered; it reads MSSRKQASQT…DPTVESEEAF (115 aa). Ser71 is modified (phosphoserine). The 172-residue stretch at 117-288 folds into the MRG domain; it reads SRMEVKVKIP…ASADYHRKAL (172 aa).

Component of the NuA4 histone acetyltransferase complex which contains the catalytic subunit KAT5/TIP60 and the subunits EP400, TRRAP/PAF400, BRD8/SMAP, EPC1, DMAP1/DNMAP1, RUVBL1/TIP49, RUVBL2, ING3, actin, ACTL6A/BAF53A, MORF4L1/MRG15, MORF4L2/MRGX, MRGBP, YEATS4/GAS41 and VPS72/YL1. The NuA4 complex interacts with MYC and the adenovirus E1A protein. MORF4L1 may also participate in the formation of NuA4 related complexes which lack the KAT5/TIP60 catalytic subunit, but which include the SWI/SNF related protein SRCAP. Component of the MSIN3A histone deacetylase complex, which includes SIN3A, HDAC2, ARID4B, MORF4L1, RBBP4/RbAp48, and RBBP7/RbAp46. Interacts with MRFAP1 and RB1. May also interact with one or more as yet undefined members of the TLE (transducin-like enhancer of split) family of transcriptional repressors.

Its subcellular location is the nucleus. Functionally, component of the NuA4 histone acetyltransferase complex which is involved in transcriptional activation of select genes principally by acetylation of nucleosomal histone H4 and H2A. This modification may both alter nucleosome - DNA interactions and promote interaction of the modified histones with other proteins which positively regulate transcription. This complex may be required for the activation of transcriptional programs associated with oncogene and proto-oncogene mediated growth induction, tumor suppressor mediated growth arrest and replicative senescence, apoptosis, and DNA repair. The NuA4 complex ATPase and helicase activities seem to be, at least in part, contributed by the association of RUVBL1 and RUVBL2 with EP400. NuA4 may also play a direct role in DNA repair when directly recruited to sites of DNA damage. Also a component of the MSIN3A complex which acts to repress transcription by deacetylation of nucleosomal histones. The sequence is that of Mortality factor 4-like protein 2 (Morf4l2) from Rattus norvegicus (Rat).